Here is a 103-residue protein sequence, read N- to C-terminus: Small ribosomal subunit protein uS10 (103 aa).

The protein belongs to the universal ribosomal protein uS10 family. In terms of assembly, part of the 30S ribosomal subunit.

Involved in the binding of tRNA to the ribosomes. This chain is Small ribosomal subunit protein uS10, found in Chromohalobacter salexigens (strain ATCC BAA-138 / DSM 3043 / CIP 106854 / NCIMB 13768 / 1H11).